The sequence spans 364 residues: Tyrosine-protein phosphatase YVH1 (364 aa).

Positions 11–173 (EVTRILGGIY…LHLFEKMGGD (163 aa)) constitute a Tyrosine-protein phosphatase domain. The active-site Phosphocysteine intermediate is C117. A Phosphoserine modification is found at S196.

The protein belongs to the protein-tyrosine phosphatase family. Non-receptor class dual specificity subfamily.

The enzyme catalyses O-phospho-L-tyrosyl-[protein] + H2O = L-tyrosyl-[protein] + phosphate. In terms of biological role, may be directly involved in signal transduction and/or cell cycle regulation. It is necessary for maintaining growth rate or spore germination. Could show both activity toward tyrosine-protein phosphate as well as with serine-protein phosphate. This chain is Tyrosine-protein phosphatase YVH1 (YVH1), found in Saccharomyces cerevisiae (strain ATCC 204508 / S288c) (Baker's yeast).